Reading from the N-terminus, the 859-residue chain is Leucine--tRNA ligase (859 aa).

Positions 42–52 (PYPSGRLHMGH) match the 'HIGH' region motif. The short motif at 618–622 (KMSKS) is the 'KMSKS' region element. Lys621 contributes to the ATP binding site.

Belongs to the class-I aminoacyl-tRNA synthetase family.

The protein resides in the cytoplasm. The catalysed reaction is tRNA(Leu) + L-leucine + ATP = L-leucyl-tRNA(Leu) + AMP + diphosphate. This chain is Leucine--tRNA ligase, found in Shewanella baltica (strain OS195).